The following is a 392-amino-acid chain: SH3 domain-binding protein 5-like (392 aa).

Residues 1-57 form a disordered region; sequence MADLKKAAGGRETPQGELRSEVVEDEGPRSPVAEEPGGSGSNSSETKLSPREEEELD. Position 13 is a phosphothreonine (T13). The span at 18 to 28 shows a compositional bias: basic and acidic residues; that stretch reads LRSEVVEDEGP. 2 positions are modified to phosphoserine: S30 and S49. Coiled-coil stretches lie at residues 59–140 and 169–272; these read RIQE…YERA and WQEM…EQIH. The disordered stretch occupies residues 275–332; sequence RRGLPPHPLGPRRSSPVGAEAGPEGIEDGDSGIEGAEGGGLEEGSSLGPGPGPDTDTL. Residues 317 to 332 are compositionally biased toward low complexity; that stretch reads EGSSLGPGPGPDTDTL. 5 positions are modified to phosphoserine: S342, S349, S357, S361, and S377. Positions 364–392 are disordered; sequence GQELGAQSRGRRGSDIGVRGGRHQRSVSL. Basic residues predominate over residues 383–392; it reads GGRHQRSVSL.

It belongs to the SH3BP5 family.

Functions as a guanine nucleotide exchange factor (GEF) for RAB11A. In Mus musculus (Mouse), this protein is SH3 domain-binding protein 5-like (Sh3bp5l).